Here is a 418-residue protein sequence, read N- to C-terminus: Phosphopentomutase (418 aa).

Mn(2+)-binding residues include Asp10, Asp297, His302, Asp338, His339, and His350.

It belongs to the phosphopentomutase family. The cofactor is Mn(2+).

The protein resides in the cytoplasm. It carries out the reaction 2-deoxy-alpha-D-ribose 1-phosphate = 2-deoxy-D-ribose 5-phosphate. The catalysed reaction is alpha-D-ribose 1-phosphate = D-ribose 5-phosphate. It participates in carbohydrate degradation; 2-deoxy-D-ribose 1-phosphate degradation; D-glyceraldehyde 3-phosphate and acetaldehyde from 2-deoxy-alpha-D-ribose 1-phosphate: step 1/2. Isomerase that catalyzes the conversion of deoxy-ribose 1-phosphate (dRib-1-P) and ribose 1-phosphate (Rib-1-P) to deoxy-ribose 5-phosphate (dRib-5-P) and ribose 5-phosphate (Rib-5-P), respectively. The protein is Phosphopentomutase of Chromohalobacter salexigens (strain ATCC BAA-138 / DSM 3043 / CIP 106854 / NCIMB 13768 / 1H11).